The sequence spans 161 residues: Ribonuclease P protein component (161 aa).

This sequence belongs to the RnpA family. Consists of a catalytic RNA component (M1 or rnpB) and a protein subunit.

It carries out the reaction Endonucleolytic cleavage of RNA, removing 5'-extranucleotides from tRNA precursor.. Its function is as follows. RNaseP catalyzes the removal of the 5'-leader sequence from pre-tRNA to produce the mature 5'-terminus. It can also cleave other RNA substrates such as 4.5S RNA. The protein component plays an auxiliary but essential role in vivo by binding to the 5'-leader sequence and broadening the substrate specificity of the ribozyme. The polypeptide is Ribonuclease P protein component (Helicobacter pylori (strain Shi470)).